The primary structure comprises 88 residues: Small ribosomal subunit protein uS15 (88 aa).

Belongs to the universal ribosomal protein uS15 family. In terms of assembly, part of the 30S ribosomal subunit. Forms a bridge to the 50S subunit in the 70S ribosome, contacting the 23S rRNA.

One of the primary rRNA binding proteins, it binds directly to 16S rRNA where it helps nucleate assembly of the platform of the 30S subunit by binding and bridging several RNA helices of the 16S rRNA. Functionally, forms an intersubunit bridge (bridge B4) with the 23S rRNA of the 50S subunit in the ribosome. This Sorangium cellulosum (strain So ce56) (Polyangium cellulosum (strain So ce56)) protein is Small ribosomal subunit protein uS15.